Reading from the N-terminus, the 105-residue chain is Urease subunit beta (105 aa).

It belongs to the urease beta subunit family. Heterotrimer of UreA (gamma), UreB (beta) and UreC (alpha) subunits. Three heterotrimers associate to form the active enzyme.

The protein resides in the cytoplasm. It carries out the reaction urea + 2 H2O + H(+) = hydrogencarbonate + 2 NH4(+). The protein operates within nitrogen metabolism; urea degradation; CO(2) and NH(3) from urea (urease route): step 1/1. The chain is Urease subunit beta from Mycobacterium sp. (strain JLS).